Here is a 1368-residue protein sequence, read N- to C-terminus: MAYSVANNQLLRKHFSTIKGIIEIPNLIDIQKNSYKRFLQAGLPPSARKNIGLEAVFRSVFPIRDFSETCSLDYVSYSLGTPKYDVGECHQRGMTFAAPVKVCVRLVSWDVDKESGVQAIRDIKEQEVYFGEIPLMTENGTFIINGTERVIVSQLHRSPGVFFDHDKGKTHSSGKILYNARVIPYRGSWLDFDFDHKDLLYVRIDRRRKLPATVLLKALGYSAEELLNYYYQVETVTVDGDSFKKKVNLDLLAGQRASTDVLGNDGEIIVKANRKFTKAAIRKLADSNVEYIPVSEEEIVGKVASTDIVDVSTGEVIVECNEEISESKLEELRTRGIVEFNILFIDHLHVGPYLRETLLLDRMATPEDARIEIYRRLRPGDPPTIKSANALFESLFFNPERYDLSVVGRIKLNYKLGLQSPEDQTTLTKDDILEVVRYLIGLRDGRGTIDDIDHLGNRRVRAVGELLENQYRVGLVRMERAIKERMSLQEVDSLMPHDLINSKPVSAVVKEFFGSSQLSQFMDQTNPLSEITHKRRLSALGPGGLTRERAGFEVRDVHPTHYGRVCPIETPEGPNIGLIASLSTYARINEHGFVETPYRIVEQGKVTNEIRYFSALEEGGHAIAQANAPLDDDGRFLNELVNARQNGEFVLIQREEIGLMDVSPKQLVSVAASLIPFLENDDANRALMGSNMQRQAVPLLRADAPLVGTGMERIVAHDSGAAVVARHNGVVESVDASRIVVKIDEGEVDEDGTGVDIYNLIKFARSNQNTCLNQKPIVKVGDRVASGGIIADGPSTEWGELALGQNVLVAFMPWEGYNFEDSILISEKLVKEDRYTSIHIEELECVARDTKLGKEEITNDIPNLGEDALKDLDESGIVRIGAEVKPGDILVGKITPKGETQLSPEEKLLRAIFGEKAGDVRDTSLRLPPGVEGVVIGARVFSRKGSDKDSRTEYIEKTEIEKLLKDQHDEIRIIRESTHGKLESLLVGQTSASALFDAAGKELLGQGEKITSEVLAEVPFARWREISLLDASENEEKLSAIMTSLAQREELIKAVFADKIEKIKRGDDLPPGVIKMVKVYIAIKRKLSVGDKMAGRHGNKGVLSRVLPEEDMPYMADGTPVEIVLNPLGVPSRMNVGQILETHLGLAARGLGVQIQEHLDRYYTPEAMRTKIGECYEDDRVAEFVDALPDDEVMQLARQLSRGVPMASPVFEGVTEEQMKNQMERAGFASSGQMTLYNGKTGEAFKEKVTVGIMYMLKLHHLVDDKIHARSIGPYSLVTQQPLGGKAQFGGQRLGEMEVWAMEAYGAAHALQEFLTVKSDDVTGRTRMYEAIVKGKHTLEAGLPESFNVLIKELQSLCLDVELLEEQE.

The protein belongs to the RNA polymerase beta chain family. The RNAP catalytic core consists of 2 alpha, 1 beta, 1 beta' and 1 omega subunit. When a sigma factor is associated with the core the holoenzyme is formed, which can initiate transcription.

It catalyses the reaction RNA(n) + a ribonucleoside 5'-triphosphate = RNA(n+1) + diphosphate. Functionally, DNA-dependent RNA polymerase catalyzes the transcription of DNA into RNA using the four ribonucleoside triphosphates as substrates. The polypeptide is DNA-directed RNA polymerase subunit beta (Syntrophotalea carbinolica (strain DSM 2380 / NBRC 103641 / GraBd1) (Pelobacter carbinolicus)).